The following is a 216-amino-acid chain: UPF0502 protein Smal_0052 (216 aa).

Belongs to the UPF0502 family.

In Stenotrophomonas maltophilia (strain R551-3), this protein is UPF0502 protein Smal_0052.